The sequence spans 669 residues: Putative heme-binding protein rrnAC3100 (669 aa).

Residue histidine 181 coordinates heme. Disordered regions lie at residues 260–351 (RVPT…PDVS) and 451–477 (LGGSLGEGVEGSETADDSDAQAAESSQ). The ABM domain occupies 579 to 667 (GTMGMFYTVK…VLADRPRHVF (89 aa)).

This sequence in the N-terminal section; belongs to the ChdC family.

The protein is Putative heme-binding protein rrnAC3100 of Haloarcula marismortui (strain ATCC 43049 / DSM 3752 / JCM 8966 / VKM B-1809) (Halobacterium marismortui).